The chain runs to 1131 residues: Phytochrome A (1131 aa).

Positions 1 to 23 (MSSSRPAHSSSSSSRTRQSSRAR) are disordered. The 186-residue stretch at 219 to 404 (SMEALCNTVV…VFAVHVNKEF (186 aa)) folds into the GAF domain. Cys-324 contributes to the phytochromobilin binding site. 2 PAS domains span residues 620–690 (VTSE…LQGR) and 750–834 (VEGD…LAGE). Residues 904–1124 (YMRHAINKPL…TFILTAELAA (221 aa)) enclose the Histidine kinase domain.

This sequence belongs to the phytochrome family. In terms of assembly, homodimer. Post-translationally, contains one covalently linked phytochromobilin chromophore.

Its function is as follows. Regulatory photoreceptor which exists in two forms that are reversibly interconvertible by light: the Pr form that absorbs maximally in the red region of the spectrum and the Pfr form that absorbs maximally in the far-red region. Photoconversion of Pr to Pfr induces an array of morphogenic responses, whereas reconversion of Pfr to Pr cancels the induction of those responses. Pfr controls the expression of a number of nuclear genes including those encoding the small subunit of ribulose-bisphosphate carboxylase, chlorophyll A/B binding protein, protochlorophyllide reductase, rRNA, etc. It also controls the expression of its own gene(s) in a negative feedback fashion. In Zea mays (Maize), this protein is Phytochrome A (PHYA1).